A 457-amino-acid polypeptide reads, in one-letter code: Glycine receptor subunit alpha-1 (457 aa).

The first 28 residues, 1–28 (MYSFNTLRFYLWETIVFFSLAASKEAEA), serve as a signal peptide directing secretion. At 29 to 250 (ARSAPKPMSP…RFHLERQMGY (222 aa)) the chain is on the extracellular side. N66 carries N-linked (GlcNAc...) asparagine glycosylation. R93 and S157 together coordinate glycine. C166 and C180 form a disulfide bridge. Zn(2+)-binding residues include E220 and D222. An intrachain disulfide couples C226 to C237. Residue 230–235 (YNTGKF) participates in strychnine binding. T232 contacts glycine. H243 contacts Zn(2+). A helical membrane pass occupies residues 251-272 (YLIQMYIPSLLIVILSWISFWI). Over 273–277 (NMDAA) the chain is Cytoplasmic. Residues 278-298 (PARVGLGITTVLTMTTQSSGS) traverse the membrane as a helical segment. Over 299 to 309 (RASLPKVSYVK) the chain is Extracellular. A helical transmembrane segment spans residues 310–330 (AIDIWMAVCLLFVFSALLEYA). The Cytoplasmic portion of the chain corresponds to 331-425 (AVNFVSRQHK…FIQRAKKIDK (95 aa)). Positions 391 to 410 (KGANNNNTTNPPPAPSKSPE) are disordered. Residues 426–446 (ISRIGFPMAFLIFNMFYWIIY) form a helical membrane-spanning segment. The Extracellular segment spans residues 447–457 (KIVRREDVHNK).

This sequence belongs to the ligand-gated ion channel (TC 1.A.9) family. Glycine receptor (TC 1.A.9.3) subfamily. GLRA1 sub-subfamily. As to quaternary structure, interacts with GLRB to form heteropentameric channels; this is probably the predominant form in vivo. Heteropentamer composed of four GLRA1 subunits and one GLRB subunit. Heteropentamer composed of two GLRA1 and three GLRB. Heteropentamer composed of three GLRA1 and two GLRB. Homopentamer (in vitro). Both homopentamers and heteropentamers form functional ion channels, but their characteristics are subtly different. In terms of tissue distribution, detected in spinal cord neurons. Detected in brain stem neurons. Detected at lower levels in hippocampus and cerebellum. Detected in the inner plexiform layer of the retina (at protein level).

Its subcellular location is the postsynaptic cell membrane. The protein resides in the synapse. The protein localises to the perikaryon. It localises to the cell projection. It is found in the dendrite. Its subcellular location is the cell membrane. The catalysed reaction is chloride(in) = chloride(out). Its activity is regulated as follows. Channel opening is triggered by extracellular glycine. Channel characteristics depend on the subunit composition; heteropentameric channels are activated by lower glycine levels and display faster desensitization. Channel opening is also triggered by taurine and beta-alanine. Inhibited by strychnine. Strychnine binding locks the channel in a closed conformation and prevents channel opening in response to extracellular glycine. Inhibited by picrotoxin. Channel activity is enhanced by 5 uM Zn(2+) and inhibited by 100 uM Zn(2+). In terms of biological role, subunit of heteromeric glycine-gated chloride channels. Plays an important role in the down-regulation of neuronal excitability. Contributes to the generation of inhibitory postsynaptic currents. Channel activity is potentiated by ethanol. Potentiation of channel activity by intoxicating levels of ethanol contribute to the sedative effects of ethanol. This chain is Glycine receptor subunit alpha-1 (Glra1), found in Mus musculus (Mouse).